We begin with the raw amino-acid sequence, 116 residues long: Iron-sulfur cluster insertion protein ErpA (116 aa).

C44, C108, and C110 together coordinate iron-sulfur cluster.

This sequence belongs to the HesB/IscA family. Homodimer. It depends on iron-sulfur cluster as a cofactor.

Its function is as follows. Required for insertion of 4Fe-4S clusters for at least IspG. The chain is Iron-sulfur cluster insertion protein ErpA from Pseudomonas aeruginosa (strain LESB58).